A 176-amino-acid polypeptide reads, in one-letter code: Woronin body major protein (176 aa).

A propeptide spanning residues Met1–Ala16 is cleaved from the precursor. A compositionally biased stretch (basic and acidic residues) spans Met1 to Ala16. The disordered stretch occupies residues Met1 to Gln31. Residues Ser174–Leu176 carry the Microbody targeting signal motif.

Belongs to the eIF-5A family. Hex1 subfamily. Forms oligomers. Self-assembles into hexagonal rods.

Its subcellular location is the cell septum. Its function is as follows. Major component of Woronin bodies, fungal-specific organelles that occlude septal pores in order to separate intact from damaged compartments. Hex-1 binds directly or indirectly to the Woronin body tether that in turn is anchored at the rim of the septal pore. In Neurospora crassa (strain ATCC 24698 / 74-OR23-1A / CBS 708.71 / DSM 1257 / FGSC 987), this protein is Woronin body major protein.